Consider the following 76-residue polypeptide: DNA-directed RNA polymerase subunit epsilon (76 aa).

Belongs to the RNA polymerase subunit epsilon family. As to quaternary structure, RNAP is composed of a core of 2 alpha, a beta and a beta' subunit. The core is associated with a delta subunit, and at least one of epsilon or omega. When a sigma factor is associated with the core the holoenzyme is formed, which can initiate transcription.

The catalysed reaction is RNA(n) + a ribonucleoside 5'-triphosphate = RNA(n+1) + diphosphate. Its function is as follows. A non-essential component of RNA polymerase (RNAP). This chain is DNA-directed RNA polymerase subunit epsilon, found in Streptococcus thermophilus (strain CNRZ 1066).